The chain runs to 31 residues: Cytochrome b6-f complex subunit 6 (31 aa).

A helical membrane pass occupies residues 3-23; it reads ILISYFCFLLVFFLFTLILFI.

Belongs to the PetL family. In terms of assembly, the 4 large subunits of the cytochrome b6-f complex are cytochrome b6, subunit IV (17 kDa polypeptide, PetD), cytochrome f and the Rieske protein, while the 4 small subunits are PetG, PetL, PetM and PetN. The complex functions as a dimer.

Its subcellular location is the plastid. It is found in the chloroplast thylakoid membrane. Its function is as follows. Component of the cytochrome b6-f complex, which mediates electron transfer between photosystem II (PSII) and photosystem I (PSI), cyclic electron flow around PSI, and state transitions. PetL is important for photoautotrophic growth as well as for electron transfer efficiency and stability of the cytochrome b6-f complex. This chain is Cytochrome b6-f complex subunit 6, found in Welwitschia mirabilis (Tree tumbo).